The chain runs to 208 residues: Thymidylate kinase (208 aa).

10 to 17 is an ATP binding site; sequence GLEGAGKS.

Belongs to the thymidylate kinase family.

The catalysed reaction is dTMP + ATP = dTDP + ADP. Functionally, phosphorylation of dTMP to form dTDP in both de novo and salvage pathways of dTTP synthesis. The sequence is that of Thymidylate kinase from Glaesserella parasuis serovar 5 (strain SH0165) (Haemophilus parasuis).